The chain runs to 355 residues: Erythronate-4-phosphate dehydrogenase (355 aa).

Residues serine 45 and threonine 66 each coordinate substrate. Residue aspartate 146 participates in NAD(+) binding. Arginine 206 is an active-site residue. Aspartate 229 is an NAD(+) binding site. Glutamate 234 is an active-site residue. Histidine 251 functions as the Proton donor in the catalytic mechanism. Glycine 254 provides a ligand contact to NAD(+). Tyrosine 255 serves as a coordination point for substrate.

The protein belongs to the D-isomer specific 2-hydroxyacid dehydrogenase family. PdxB subfamily. In terms of assembly, homodimer.

It localises to the cytoplasm. The enzyme catalyses 4-phospho-D-erythronate + NAD(+) = (R)-3-hydroxy-2-oxo-4-phosphooxybutanoate + NADH + H(+). Its pathway is cofactor biosynthesis; pyridoxine 5'-phosphate biosynthesis; pyridoxine 5'-phosphate from D-erythrose 4-phosphate: step 2/5. Its function is as follows. Catalyzes the oxidation of erythronate-4-phosphate to 3-hydroxy-2-oxo-4-phosphonooxybutanoate. In Acinetobacter baylyi (strain ATCC 33305 / BD413 / ADP1), this protein is Erythronate-4-phosphate dehydrogenase.